The following is a 181-amino-acid chain: Transcriptional repressor NrdR (181 aa).

The segment at 3–34 is a zinc-finger region; sequence CPYCQHTDSRVLESRSTGAGRSIRRRRECLSC. Residues 49-139 enclose the ATP-cone domain; it reads ISVIKRNGQS…VYRQFQGVDD (91 aa).

This sequence belongs to the NrdR family. Zn(2+) serves as cofactor.

Functionally, negatively regulates transcription of bacterial ribonucleotide reductase nrd genes and operons by binding to NrdR-boxes. This Picosynechococcus sp. (strain ATCC 27264 / PCC 7002 / PR-6) (Agmenellum quadruplicatum) protein is Transcriptional repressor NrdR.